The sequence spans 623 residues: Putative ABC transporter ATP-binding protein MG014 (623 aa).

An ABC transmembrane type-1 domain is found at 16 to 325 (LILAPFFTFA…YIVLGFILTS (310 aa)). Helical transmembrane passes span 27–47 (IVID…VFSI), 81–101 (VLAT…LISI), 157–177 (FLRL…FAVT), 181–201 (DMSI…GILN), 266–286 (NIPF…LLVF), and 307–327 (IFAF…TSLT). One can recognise an ABC transporter domain in the interval 365 to 611 (LEFRNISFGL…CSLYQKMKES (247 aa)). An ATP-binding site is contributed by 400 to 407 (GPTGSGKS).

The protein belongs to the ABC transporter superfamily.

Its subcellular location is the cell membrane. The sequence is that of Putative ABC transporter ATP-binding protein MG014 from Mycoplasma genitalium (strain ATCC 33530 / DSM 19775 / NCTC 10195 / G37) (Mycoplasmoides genitalium).